Reading from the N-terminus, the 208-residue chain is Uracil phosphoribosyltransferase (208 aa).

5-phospho-alpha-D-ribose 1-diphosphate is bound by residues Arg78, Arg103, and 130 to 138 (DPMLATGGT). Residues Ile193 and 198-200 (GDA) each bind uracil. 5-phospho-alpha-D-ribose 1-diphosphate is bound at residue Asp199.

This sequence belongs to the UPRTase family. Requires Mg(2+) as cofactor.

It carries out the reaction UMP + diphosphate = 5-phospho-alpha-D-ribose 1-diphosphate + uracil. Its pathway is pyrimidine metabolism; UMP biosynthesis via salvage pathway; UMP from uracil: step 1/1. With respect to regulation, allosterically activated by GTP. Catalyzes the conversion of uracil and 5-phospho-alpha-D-ribose 1-diphosphate (PRPP) to UMP and diphosphate. This is Uracil phosphoribosyltransferase from Oleidesulfovibrio alaskensis (strain ATCC BAA-1058 / DSM 17464 / G20) (Desulfovibrio alaskensis).